The chain runs to 152 residues: Small ribosomal subunit protein uS8m (152 aa).

Belongs to the universal ribosomal protein uS8 family.

The protein resides in the mitochondrion. In Dictyostelium discoideum (Social amoeba), this protein is Small ribosomal subunit protein uS8m (mrps8).